A 333-amino-acid chain; its full sequence is GTPase Obg (333 aa).

Residues 1–159 (MQFIDLAEIH…RHLRLELKLL (159 aa)) form the Obg domain. An OBG-type G domain is found at 160-328 (AEVGIIGLPN…LLEAVWQELG (169 aa)). GTP contacts are provided by residues 166-173 (GLPNAGKS), 191-195 (FTTLV), 213-216 (DIPG), 280-283 (NKID), and 309-311 (SAV). The Mg(2+) site is built by serine 173 and threonine 193.

It belongs to the TRAFAC class OBG-HflX-like GTPase superfamily. OBG GTPase family. Monomer. It depends on Mg(2+) as a cofactor.

Its subcellular location is the cytoplasm. Functionally, an essential GTPase which binds GTP, GDP and possibly (p)ppGpp with moderate affinity, with high nucleotide exchange rates and a fairly low GTP hydrolysis rate. Plays a role in control of the cell cycle, stress response, ribosome biogenesis and in those bacteria that undergo differentiation, in morphogenesis control. This chain is GTPase Obg, found in Thermosynechococcus vestitus (strain NIES-2133 / IAM M-273 / BP-1).